We begin with the raw amino-acid sequence, 216 residues long: UPF0598 protein C8orf82 (216 aa).

Belongs to the UPF0598 family.

The polypeptide is UPF0598 protein C8orf82 (C8orf82) (Homo sapiens (Human)).